The following is a 930-amino-acid chain: Isoleucine--tRNA ligase (930 aa).

Positions 57-67 (PYANGNIHVGH) match the 'HIGH' region motif. Glu554 provides a ligand contact to L-isoleucyl-5'-AMP. A 'KMSKS' region motif is present at residues 595 to 599 (KMSKS). Lys598 is an ATP binding site. 4 residues coordinate Zn(2+): Cys888, Cys891, Cys908, and Cys911.

Belongs to the class-I aminoacyl-tRNA synthetase family. IleS type 1 subfamily. As to quaternary structure, monomer. The cofactor is Zn(2+).

It is found in the cytoplasm. The catalysed reaction is tRNA(Ile) + L-isoleucine + ATP = L-isoleucyl-tRNA(Ile) + AMP + diphosphate. Its function is as follows. Catalyzes the attachment of isoleucine to tRNA(Ile). As IleRS can inadvertently accommodate and process structurally similar amino acids such as valine, to avoid such errors it has two additional distinct tRNA(Ile)-dependent editing activities. One activity is designated as 'pretransfer' editing and involves the hydrolysis of activated Val-AMP. The other activity is designated 'posttransfer' editing and involves deacylation of mischarged Val-tRNA(Ile). The sequence is that of Isoleucine--tRNA ligase from Streptococcus pneumoniae (strain Hungary19A-6).